The chain runs to 411 residues: MSFIEEFINKGYFHQCTDLDRLTTITKETKIAAYIGFDCTATSLHIGSLMQIMILRLLQQHGHKPIVIIGGGTSKIGDPTWKDEARKILSKEDIAKNAEGIKKSLSKFIKFGEGESDAIMLDNAEWLDSLNYLDFLRDFGSYFSVNRMLTMDSVRLRLEREQHLSFLEFNYMLLQAYDFYYLSKHYNCSLQLGGSDQWGNIVMGADLTRKISGKDVFGMTTPLLTTSSGAKMGKTAAGAVWLNEDLLSPYDYYQYWRNCEDADIVRFAKLYSELTQEELNKFESLAAEDINSAKKQLAYELTKLCHSEQAAKSALETAVKIFEEGQIDENLPIVVLEQEVLQAGISAYELFHEAGLASSKSEARKLIRGKGAKINDRLVEDENMIINTTFLLDKNVIKLSAGKKRHILVRV.

Tyrosine 34 contacts L-tyrosine. Residues 39-48 carry the 'HIGH' region motif; sequence CTATSLHIGS. The L-tyrosine site is built by tyrosine 171 and glutamine 175. Positions 231–235 match the 'KMSKS' region motif; sequence KMGKT. An ATP-binding site is contributed by lysine 234. Residues 345–411 enclose the S4 RNA-binding domain; it reads ISAYELFHEA…GKKRHILVRV (67 aa).

The protein belongs to the class-I aminoacyl-tRNA synthetase family. TyrS type 1 subfamily. As to quaternary structure, homodimer.

The protein localises to the cytoplasm. The catalysed reaction is tRNA(Tyr) + L-tyrosine + ATP = L-tyrosyl-tRNA(Tyr) + AMP + diphosphate + H(+). Functionally, catalyzes the attachment of tyrosine to tRNA(Tyr) in a two-step reaction: tyrosine is first activated by ATP to form Tyr-AMP and then transferred to the acceptor end of tRNA(Tyr). The polypeptide is Tyrosine--tRNA ligase (Rickettsia felis (strain ATCC VR-1525 / URRWXCal2) (Rickettsia azadi)).